A 243-amino-acid chain; its full sequence is 7-cyano-7-deazaguanine synthase (243 aa).

18–28 (FSGGQDSATCL) contacts ATP. Cys206, Cys221, Cys224, and Cys227 together coordinate Zn(2+).

The protein belongs to the QueC family. Zn(2+) is required as a cofactor.

It carries out the reaction 7-carboxy-7-deazaguanine + NH4(+) + ATP = 7-cyano-7-deazaguanine + ADP + phosphate + H2O + H(+). It participates in purine metabolism; 7-cyano-7-deazaguanine biosynthesis. Catalyzes the ATP-dependent conversion of 7-carboxy-7-deazaguanine (CDG) to 7-cyano-7-deazaguanine (preQ(0)). This is 7-cyano-7-deazaguanine synthase from Methylorubrum extorquens (strain CM4 / NCIMB 13688) (Methylobacterium extorquens).